The following is a 1820-amino-acid chain: Sodium channel protein (1820 aa).

The Cytoplasmic segment spans residues 1 to 117 (MARKFSSARP…FNPIRRGAIR (117 aa)). The stretch at 108-410 (FNPIRRGAIR…VAMAYEEQNQ (303 aa)) is one I repeat. Residues 118–138 (VFVNSAFNFFIMFTIFSNCIF) traverse the membrane as a helical segment. Residues 139-149 (MTISNPPAWSK) lie on the Extracellular side of the membrane. The chain crosses the membrane as a helical span at residues 150-171 (IVEYTFTGIYTFEVIVKVLSRG). Topologically, residues 172 to 176 (FCIGH) are cytoplasmic. A helical transmembrane segment spans residues 177–197 (FTFLRDPWNWLDFSVVTMTYI). The Extracellular segment spans residues 198-203 (TEFIDL). The chain crosses the membrane as a helical; Voltage-sensor span at residues 204-224 (RNVSALRTFRVLRALKTITIF). Residues 225–243 (PGLKTIVRALIESMKQMGD) lie on the Cytoplasmic side of the membrane. The helical transmembrane segment at 244–264 (VVILTVFSLAVFTLAGMQLFM) threads the bilayer. Residues 265–346 (GNLRHKCIRW…PNYGYTNYDN (82 aa)) are Extracellular-facing. A disulfide bridge links cysteine 271 with cysteine 324. Residues asparagine 278, asparagine 288, and asparagine 317 are each glycosylated (N-linked (GlcNAc...) asparagine). Positions 285-342 (SAYNTTFDFTAYIENEENQYFLDGALDALLCGNNSDAGKCPEGYTCMKAGRNPNYGYT) are non-homologous region of repeat I. Positions 347–371 (FAWTFLCLFRLMLQDYWENLYQMTL) form an intramembrane region, pore-forming. The Extracellular segment spans residues 372-378 (RAAGKSY). A helical membrane pass occupies residues 379-402 (MVFFIMVIFLGSFYLINLILAVVA). Residues 403–557 (MAYEEQNQAT…CCGPWVFLKK (155 aa)) lie on the Cytoplasmic side of the membrane. Residues 483 to 507 (SVKLSTEEQRSDSKSMDSKHSVDKP) form a disordered region. Residues 487-507 (STEEQRSDSKSMDSKHSVDKP) are compositionally biased toward basic and acidic residues. The II repeat unit spans residues 548–811 (CCGPWVFLKK…EEDDEVNSLQ (264 aa)). The chain crosses the membrane as a helical span at residues 558-578 (WVHFVMMDPFTDLFITLCIIL). The Extracellular portion of the chain corresponds to 579–599 (NTLFMSIEHHPMNESFQSLLS). A glycan (N-linked (GlcNAc...) asparagine) is linked at asparagine 591. The chain crosses the membrane as a helical span at residues 600–620 (AGNLVFTTIFAAEMVLKIIAL). The Cytoplasmic segment spans residues 621–625 (DPYYY). The chain crosses the membrane as a helical span at residues 626 to 643 (FQQTWNIFDSIIVSLSLL). The Extracellular segment spans residues 644–650 (ELGLSNM). The chain crosses the membrane as a helical; Voltage-sensor span at residues 651–671 (QGMSVLRSLRLLRIFKLAKSW). Over 672–690 (PTLNILIKIICNSVGALGN) the chain is Cytoplasmic. A helical membrane pass occupies residues 691–711 (LTIVLAIIVFIFALVGFQLFG). Residues 712-734 (KNYKEYVCKISDDCELPRWHMND) are Extracellular-facing. Residues 735 to 755 (FFHSFLIVFRALCGEWIETMW) constitute an intramembrane region (pore-forming). Topologically, residues 756–766 (DCMEVGGVPMC) are extracellular. A disulfide bridge connects residues cysteine 757 and cysteine 766. Residues 767–790 (LAVYMMVIIIGNLVMLNLFLALLL) form a helical membrane-spanning segment. Residues 791 to 1004 (SSFSSDNLSS…TIVEHDYFET (214 aa)) are Cytoplasmic-facing. Disordered regions lie at residues 844 to 864 (PPSDDVVGEEGDNEGKKDTLP) and 891 to 959 (VKGE…SKDP). Residues 896–910 (EIEEEGLVDSSDEED) are compositionally biased toward acidic residues. The span at 924–935 (SVCSTVDYSPSE) shows a compositional bias: polar residues. Acidic residues predominate over residues 942–953 (EEEEEEEEEPEE). The stretch at 988 to 1295 (NLRRTCYTIV…KKYYNAMKKL (308 aa)) is one III repeat. Residues 1005–1025 (FIIFMILLSSGVLAFEDIYIW) traverse the membrane as a helical segment. Residues 1026-1037 (RRRVIKVILEYA) are Extracellular-facing. Residues 1038–1058 (DKVFTYVFIVEMLLKWVAYGF) form a helical membrane-spanning segment. Over 1059-1065 (KRYFTDA) the chain is Cytoplasmic. A helical membrane pass occupies residues 1066–1086 (WCWLDFVIVGASIMGITSSLL). Over 1087–1091 (GYEEL) the chain is Extracellular. Residues 1092–1112 (GAIKNLRTIRALRPLRALSRF) traverse the membrane as a helical; Voltage-sensor segment. The Cytoplasmic segment spans residues 1113-1131 (EGMKVVVRALLGAIPSIMN). Residues 1132–1152 (VLLVCLMFWLIFSIMGVNLFA) traverse the membrane as a helical segment. At 1153–1199 (GKFYRCINTTTDEILPVEEVNNRSDCMALMYTNEVRWVNLKVNYDNA) the chain is on the extracellular side. Asparagine 1160 and asparagine 1174 each carry an N-linked (GlcNAc...) asparagine glycan. A non-homologous region of repeat III region spans residues 1172–1194 (VNNRSDCMALMYTNEVRWVNLKV). An intramembrane region (pore-forming) is located at residues 1200-1221 (GMGYLSLLQVSTFKGWMDIMYA). Residues 1222–1243 (AVDSREVEDQPIYEINVYMYLY) lie on the Extracellular side of the membrane. A helical transmembrane segment spans residues 1244 to 1264 (FVIFIVFGAFFTLNLFIGVII). Over 1265–1320 (DNFNRQKQKLGGEDLFMTEEQKKYYNAMKKLGSKKAAKCIPRPSNVVQGVVYDIVT) the chain is Cytoplasmic. One copy of the IV repeat lies at 1304–1602 (IPRPSNVVQG…WHKFDVHGTQ (299 aa)). The chain crosses the membrane as a helical span at residues 1321 to 1341 (QPFTDIFIMALICINMVAMMV). Residues 1342 to 1352 (ESEDQSQVKKD) lie on the Extracellular side of the membrane. The chain crosses the membrane as a helical span at residues 1353–1376 (ILSQINVIFVIIFTVECLLKLLAL). Residues 1377–1380 (RQYF) are Cytoplasmic-facing. Residues 1381-1398 (FTVGWNVFDFAVVVISII) form a helical membrane-spanning segment. Topologically, residues 1399 to 1416 (GLLLSDIIEKYFVSPTLF) are extracellular. A helical; Voltage-sensor transmembrane segment spans residues 1417 to 1437 (RVIRLARIARVLRLIRAAKGI). Residues 1438-1453 (RTLLFALMMSLPALFN) are Cytoplasmic-facing. A helical transmembrane segment spans residues 1454-1474 (IGLLLFLIMFIFSIFGMSNFA). The Extracellular portion of the chain corresponds to 1475–1490 (YVKKQGGVDDIFNFET). The segment at 1490–1505 (TFGNSMICLFEITTSA) is non-homologous region of repeat IV. An intramembrane region (pore-forming) is located at residues 1491–1513 (FGNSMICLFEITTSAGWDGLLLP). The Extracellular portion of the chain corresponds to 1514 to 1543 (TLNTGPPDCDPDVENPGTDVRGNCGNPGKG). A helical membrane pass occupies residues 1544–1567 (ITFFCSYIILSFLVVVNMYIAIIL). Over 1568–1820 (ENFGVAQEES…GAIVVRESIV (253 aa)) the chain is Cytoplasmic.

It belongs to the sodium channel (TC 1.A.1.10) family.

It is found in the cell membrane. Functionally, mediates the voltage-dependent sodium ion permeability of excitable membranes. Assuming opened or closed conformations in response to the voltage difference across the membrane, the protein forms a sodium-selective channel through which Na(+) ions may pass in accordance with their electrochemical gradient. In Electrophorus electricus (Electric eel), this protein is Sodium channel protein.